The chain runs to 296 residues: Glycine N-acyltransferase (296 aa).

3 positions are modified to N6-acetyllysine; alternate: lysine 16, lysine 127, and lysine 141. An N6-succinyllysine; alternate mark is found at lysine 16, lysine 127, and lysine 141. The residue at position 159 (lysine 159) is an N6-acetyllysine. Lysine 169 is subject to N6-succinyllysine. N6-acetyllysine; alternate occurs at positions 183 and 256. 2 positions are modified to N6-succinyllysine; alternate: lysine 183 and lysine 256.

The protein belongs to the glycine N-acyltransferase family. As to expression, predominantly expressed in liver (at protein level) and kidney. Down-regulated in hepatocellular carcinoma and other liver cancers.

It is found in the mitochondrion. It carries out the reaction an acyl-CoA + glycine = an N-acylglycine + CoA + H(+). The enzyme catalyses benzoyl-CoA + glycine = N-benzoylglycine + CoA + H(+). Mitochondrial acyltransferase which transfers an acyl group to the N-terminus of glycine and glutamine, although much less efficiently. Can conjugate numerous substrates to form a variety of N-acylglycines, with a preference for benzoyl-CoA over phenylacetyl-CoA as acyl donors. Thereby detoxify xenobiotics, such as benzoic acid or salicylic acid, and endogenous organic acids, such as isovaleric acid. In Homo sapiens (Human), this protein is Glycine N-acyltransferase (GLYAT).